The chain runs to 353 residues: MGSASSKTRKDKAKSSTIAACPTDTAAAKACPTRLDDGLAQVAMFAGLRQVTMGVLRIDYDYQTNLGDILDPRSFDFRLVSATVEGLTFKRAQEGEPLPCYVMSNLDGAVKKLIDAGADFIVGDCGFLVYWQVYVRDFAQQYAGGRACPVMLSSLVLSLPLLATIPVGGKIGILTASKGSLMKMQKKLASVIELQKEEARTRAVPAAVQPSGIEINFSDPRFKVVGLDTVNSFKTALADDSGVDDRRSIAIEIAKYCKQVACEDPAICAWLIECTEAGGFSWAIKLGTGLPVWDPVTIGRFLSLGFTSSLPSVALTLGETGQVALDPNETDVSKGRPTKAEHRFGPEFEEMLQ.

Catalysis depends on proton donor/acceptor residues C125 and C274. The segment at 326 to 353 is disordered; the sequence is DPNETDVSKGRPTKAEHRFGPEFEEMLQ. Basic and acidic residues predominate over residues 331-346; it reads DVSKGRPTKAEHRFGP.

The protein belongs to the aspartate/glutamate racemases family. ALMA1 subfamily. As to quaternary structure, homotetramer.

It carries out the reaction S,S-dimethyl-beta-propiothetin = acrylate + dimethyl sulfide + H(+). In terms of biological role, mediates cleavage of dimethylsulfoniopropionate (DMSP) into dimethyl sulfide (DMS) and acrylate. DMS is the principal form by which sulfur is transported from oceans to the atmosphere and is a key component of the ocean sulfur cycle. The chain is Dimethylsulfoniopropionate lyase 2 from Emiliania huxleyi (strain CCMP1516).